The primary structure comprises 363 residues: Copper-containing nitrite reductase (363 aa).

The N-terminal stretch at 1–24 is a signal peptide; sequence MSVFRSVLGACVLLGSCASSLALA. Plastocyanin-like domains lie at 25–193 and 194–363; these read GGAE…YDRV and YTIG…EPKQ. The Cu cation site is built by histidine 113, histidine 118, histidine 153, cysteine 154, histidine 163, methionine 168, and histidine 324.

Belongs to the multicopper oxidase family. Homotrimer. Cu(2+) serves as cofactor. The cofactor is Cu(+). Requires FAD as cofactor.

It is found in the periplasm. The catalysed reaction is nitric oxide + Fe(III)-[cytochrome c] + H2O = Fe(II)-[cytochrome c] + nitrite + 2 H(+). Its pathway is nitrogen metabolism; nitrate reduction (denitrification); dinitrogen from nitrate: step 2/4. This chain is Copper-containing nitrite reductase (nirK), found in Pseudomonas chlororaphis (Pseudomonas aureofaciens).